The sequence spans 223 residues: Flagellar L-ring protein 2 (223 aa).

The N-terminal stretch at 1 to 17 (MKWLSKSWAVAVVLLVG) is a signal peptide. Residue C18 is the site of N-palmitoyl cysteine attachment. The S-diacylglycerol cysteine moiety is linked to residue C18.

The protein belongs to the FlgH family. In terms of assembly, the basal body constitutes a major portion of the flagellar organelle and consists of four rings (L,P,S, and M) mounted on a central rod.

The protein resides in the cell outer membrane. It localises to the bacterial flagellum basal body. Assembles around the rod to form the L-ring and probably protects the motor/basal body from shearing forces during rotation. In Vibrio parahaemolyticus serotype O3:K6 (strain RIMD 2210633), this protein is Flagellar L-ring protein 2.